Reading from the N-terminus, the 480-residue chain is 2-succinylbenzoate--CoA ligase (480 aa).

This sequence belongs to the ATP-dependent AMP-binding enzyme family. MenE subfamily.

It catalyses the reaction 2-succinylbenzoate + ATP + CoA = 2-succinylbenzoyl-CoA + AMP + diphosphate. Its pathway is quinol/quinone metabolism; 1,4-dihydroxy-2-naphthoate biosynthesis; 1,4-dihydroxy-2-naphthoate from chorismate: step 5/7. The protein operates within quinol/quinone metabolism; menaquinone biosynthesis. In terms of biological role, converts 2-succinylbenzoate (OSB) to 2-succinylbenzoyl-CoA (OSB-CoA). In Oceanobacillus iheyensis (strain DSM 14371 / CIP 107618 / JCM 11309 / KCTC 3954 / HTE831), this protein is 2-succinylbenzoate--CoA ligase.